The sequence spans 413 residues: Protein arginine N-methyltransferase 2 (413 aa).

The interval 148–187 (LDGSDTEMGDKGGSARDVPASADSAPADSAGHSSSEPTAV) is disordered. Low complexity predominate over residues 162–182 (ARDVPASADSAPADSAGHSSS). One can recognise an RMT2 domain in the interval 192–413 (TAAHQDTYLQ…HYYHPEISFQ (222 aa)). Residues Tyr-199, Met-229, 252-257 (FGMGII), 273-275 (EAH), 300-301 (WQ), and Asp-321 each bind S-adenosyl-L-methionine.

This sequence belongs to the class I-like SAM-binding methyltransferase superfamily. RMT2 methyltransferase family. In terms of assembly, monomer.

Its subcellular location is the cytoplasm. It localises to the nucleus. S-adenosyl-L-methionine-dependent protein-arginine N-methyltransferase that methylates the delta-nitrogen atom of arginine residues to form N5-methylarginine (type IV) in target proteins. Monomethylates ribosomal protein L12. The chain is Protein arginine N-methyltransferase 2 from Eremothecium gossypii (strain ATCC 10895 / CBS 109.51 / FGSC 9923 / NRRL Y-1056) (Yeast).